Reading from the N-terminus, the 32-residue chain is Mu-theraphotoxin-Se1a (32 aa).

3 disulfides stabilise this stretch: Cys2–Cys17, Cys9–Cys22, and Cys16–Cys28.

It belongs to the neurotoxin 10 (Hwtx-1) family. As to expression, expressed by the venom gland.

It localises to the secreted. Voltage-gated sodium channel Nav1.7/SCN9A inhibitor. The protein is Mu-theraphotoxin-Se1a of Selenocosmia effera (Tarantula spider).